Here is a 60-residue protein sequence, read N- to C-terminus: Large ribosomal subunit protein bL32 (60 aa).

The protein belongs to the bacterial ribosomal protein bL32 family.

In Azotobacter vinelandii (strain DJ / ATCC BAA-1303), this protein is Large ribosomal subunit protein bL32.